Reading from the N-terminus, the 125-residue chain is Ribonuclease P protein component (125 aa).

Belongs to the RnpA family. As to quaternary structure, consists of a catalytic RNA component (M1 or rnpB) and a protein subunit.

The catalysed reaction is Endonucleolytic cleavage of RNA, removing 5'-extranucleotides from tRNA precursor.. In terms of biological role, RNaseP catalyzes the removal of the 5'-leader sequence from pre-tRNA to produce the mature 5'-terminus. It can also cleave other RNA substrates such as 4.5S RNA. The protein component plays an auxiliary but essential role in vivo by binding to the 5'-leader sequence and broadening the substrate specificity of the ribozyme. This chain is Ribonuclease P protein component, found in Rhodococcus opacus (strain B4).